A 121-amino-acid chain; its full sequence is Putative RNase MJ1216 (121 aa).

Residues arginine 76 and histidine 81 contribute to the active site. Residues 76 to 83 (RDKLIHQY) carry the RX(4)HXY motif motif. The residue at position 83 (tyrosine 83) is an O-di-AMP-tyrosine.

It belongs to the HepT RNase toxin family. Homodimer, probably forms a complex with antitoxin MJ1215 or MJ1217. Post-translationally, modified by antitoxin MJ1215 or MJ1217; probably at least 2 successive AMPylation events occur on Tyr-83.

Its function is as follows. Probable toxic component of a putative type VII toxin-antitoxin (TA) system, probably an RNase. Probably neutralized by antitoxin MJ1215 or MJ1217. Neutralization may be due to AMPylation by antitoxin. This chain is Putative RNase MJ1216, found in Methanocaldococcus jannaschii (strain ATCC 43067 / DSM 2661 / JAL-1 / JCM 10045 / NBRC 100440) (Methanococcus jannaschii).